The chain runs to 98 residues: uncharacterized protein (98 aa).

This is an uncharacterized protein from Acidianus two-tailed virus (ATV).